A 20-amino-acid chain; its full sequence is DELTA-actitoxin-Afr1b (20 aa).

The protein belongs to the actinoporin family. Sea anemone subfamily. Octamer or nonamer in membranes. Monomer in the soluble state.

The protein resides in the secreted. The protein localises to the nematocyst. Its subcellular location is the target cell membrane. Pore-forming toxin (PFT) that consists of a crown-shaped octamer or nonamer that forms cation-selective hydrophilic pores of about 1.5 nm (inside) and 13 nm (outside) and causes cytolysis. It causes cardiac stimulation. Also causes hemolysis (HC(50)=0.4 nM). Interestingly, the Phe-16 is crucial for hemolysis. Pore formation is a multi-step process that involves specific recognition of membrane sphingomyelin (but neither cholesterol nor phosphatidylcholine) using aromatic rich region and adjacent phosphocholine (POC) binding site, firm binding to the membrane (mainly driven by hydrophobic interactions) accompanied by the transfer of the N-terminal region to the lipid-water interface and finally pore formation after oligomerization of monomers. It is probable that a dimeric form is an assembly intermediate before the complete oligomerization. The formation of stable pores occurs only in vesicles composed of DOPC/SM (there is no oligomerization when the PFT is treated with vesicles of DOPC or SM alone). The transmembrane pore displays 8 lateral perforations, one at each subunit-subunit interface, partially occupied by the acyl-chain region of a bridging lipid. Each pore contains 24 lipid molecules, firmly bound to each subunit, that is, 3 lipids (L1, L2, L3, L4 and/or L5) are associated to each subunit. Lipid L1 bridges 2 subunits, whereas lipids L2 and L3 bind to sites at single subunit. The sequence is that of DELTA-actitoxin-Afr1b from Actinia fragacea (Strawberry anemone).